We begin with the raw amino-acid sequence, 420 residues long: MSEKRVQPLARDAMAYVLAGGRGSRLKELTDRRAKPAVYFGGKARIIDFALSNALNSGIRRIGVATQYKAHSLIRHLQRGWDFFRPERNESFDILPASQRVSETQWYEGTADAVYQNIDIIEPYAPEYMVILAGDHIYKMDYEYMLQQHVDSGADVTIGCLEVPRMEATGFGVMHVNEKDEIIDFIEKPADPPGIPGNEGFALASMGIYVFHTKFLMEAVRRDAADPTSSRDFGKDIIPYIVEHGKAVAHRFADSCVRSDFEHEPYWRDVGTIDAYWQANIDLTDVVPDLDIYDKSWPIWTYAEITPPAKFVHDDEDRRGSAVSSVVSGDCIISGAALNRSLLFTGVRANSYSRLENAVVLPSVKIGRHAQLSNVVIDHGVVIPEGLIVGEDPELDAKRFRRTESGICLITQSMIDKLDL.

Alpha-D-glucose 1-phosphate is bound by residues Y107, G172, 187 to 188, and S205; that span reads EK.

This sequence belongs to the bacterial/plant glucose-1-phosphate adenylyltransferase family. As to quaternary structure, homotetramer.

The catalysed reaction is alpha-D-glucose 1-phosphate + ATP + H(+) = ADP-alpha-D-glucose + diphosphate. The protein operates within glycan biosynthesis; glycogen biosynthesis. Involved in the biosynthesis of ADP-glucose, a building block required for the elongation reactions to produce glycogen. Catalyzes the reaction between ATP and alpha-D-glucose 1-phosphate (G1P) to produce pyrophosphate and ADP-Glc. This Rhizobium radiobacter (Agrobacterium tumefaciens) protein is Glucose-1-phosphate adenylyltransferase.